The following is a 217-amino-acid chain: Phosphate-specific transport system accessory protein PhoU homolog 2 (217 aa).

Belongs to the PhoU family. As to quaternary structure, homodimer.

Its subcellular location is the cytoplasm. Its function is as follows. Plays a role in the regulation of phosphate uptake. The sequence is that of Phosphate-specific transport system accessory protein PhoU homolog 2 from Methanothermobacter thermautotrophicus (strain ATCC 29096 / DSM 1053 / JCM 10044 / NBRC 100330 / Delta H) (Methanobacterium thermoautotrophicum).